We begin with the raw amino-acid sequence, 127 residues long: S1-like domain-containing protein C146.08c (127 aa).

Residues 10–86 (SFDPPARLEK…NKIDGTILYV (77 aa)) form the S1-like domain. Residues 107–127 (ESLNQNDSEESSSSEEEYDSD) form a disordered region. The span at 113-127 (DSEESSSSEEEYDSD) shows a compositional bias: acidic residues. The residue at position 124 (Y124) is a Phosphotyrosine. S126 bears the Phosphoserine mark.

This sequence belongs to the EIF1AD family.

The protein localises to the cytoplasm. It localises to the nucleus. In Schizosaccharomyces pombe (strain 972 / ATCC 24843) (Fission yeast), this protein is S1-like domain-containing protein C146.08c.